We begin with the raw amino-acid sequence, 606 residues long: Probable potassium transport system protein Kup 2 (606 aa).

12 helical membrane-spanning segments follow: residues 18 to 38 (GLVF…IMTL), 46 to 66 (VLGI…VEYA), 97 to 117 (VAFV…DGII), 140 to 160 (AQGV…IFQF), 169 to 189 (AFGP…IVSI), 204 to 224 (AVTF…EVIL), 247 to 267 (AWYF…AFIL), 286 to 306 (ILYI…SQAL), 339 to 359 (IYIG…MLIF), 368 to 388 (AYGL…TMIF), 395 to 415 (WKVP…TANF), and 418 to 438 (LPHG…IMII).

It belongs to the HAK/KUP transporter (TC 2.A.72) family.

The protein resides in the cell inner membrane. The enzyme catalyses K(+)(in) + H(+)(in) = K(+)(out) + H(+)(out). Transport of potassium into the cell. Likely operates as a K(+):H(+) symporter. This Geobacter metallireducens (strain ATCC 53774 / DSM 7210 / GS-15) protein is Probable potassium transport system protein Kup 2.